The chain runs to 672 residues: Serine/threonine-protein kinase ppk16 (672 aa).

The Protein kinase domain maps to 31 to 279 (YRIESVVGEG…IDQIISHPYF (249 aa)). ATP-binding positions include 37 to 45 (VGEGSFGKV) and Lys60. Asp148 (proton acceptor) is an active-site residue. At Ser231 the chain carries Phosphoserine. The segment covering 375 to 384 (VSVMSNNQDS) has biased composition (polar residues). Disordered stretches follow at residues 375–396 (VSVM…DSSN), 416–436 (DTLS…ENYL), 464–572 (NSFG…YSNV), and 632–672 (SGRK…TDLL). Positions 472–487 (NLPQTTHVDTGEQNTP) are enriched in polar residues. Low complexity predominate over residues 508 to 523 (SNSQNSPSKSSNLSIN). Over residues 531-541 (LQNTVISPQPT) the composition is skewed to polar residues. Composition is skewed to low complexity over residues 549–572 (RSLS…YSNV) and 639–649 (SSSSLMFNQSS).

It belongs to the protein kinase superfamily. Ser/Thr protein kinase family.

It is found in the cytoplasm. It catalyses the reaction L-seryl-[protein] + ATP = O-phospho-L-seryl-[protein] + ADP + H(+). The enzyme catalyses L-threonyl-[protein] + ATP = O-phospho-L-threonyl-[protein] + ADP + H(+). Has a role in meiosis. The polypeptide is Serine/threonine-protein kinase ppk16 (ppk16) (Schizosaccharomyces pombe (strain 972 / ATCC 24843) (Fission yeast)).